Consider the following 388-residue polypeptide: Muscleblind-like protein 1 (388 aa).

A Phosphothreonine modification is found at Thr6. 4 C3H1-type zinc fingers span residues Trp13 to Lys41, Asn47 to Pro73, Thr179 to Asp207, and Asp215 to Ala241.

The protein belongs to the muscleblind family. In terms of assembly, interacts with DDX1 and YBX1. Interacts with HNRNPH1; the interaction in RNA-independent. Interacts with RBPMS; the interaction allows cooperative assembly of RNA-bound stable cell-specific alternative splicing regulatory complexes. As to expression, highly expressed in cardiac, skeletal muscle and during myoblast differentiation. Weakly expressed in other tissues (at protein level). Expressed in heart, brain, placenta, lung, liver, skeletal muscle, kidney and pancreas.

It is found in the nucleus. The protein resides in the cytoplasm. The protein localises to the cytoplasmic granule. Functionally, mediates pre-mRNA alternative splicing regulation. Acts either as activator or repressor of splicing on specific pre-mRNA targets. Inhibits cardiac troponin-T (TNNT2) pre-mRNA exon inclusion but induces insulin receptor (IR) pre-mRNA exon inclusion in muscle. Antagonizes the alternative splicing activity pattern of CELF proteins. Regulates the TNNT2 exon 5 skipping through competition with U2AF2. Inhibits the formation of the spliceosome A complex on intron 4 of TNNT2 pre-mRNA. Binds to the stem-loop structure within the polypyrimidine tract of TNNT2 intron 4 during spliceosome assembly. Binds to the 5'-YGCU(U/G)Y-3'consensus sequence. Binds to the IR RNA. Binds to expanded CUG repeat RNA, which folds into a hairpin structure containing GC base pairs and bulged, unpaired U residues. Together with RNA binding proteins RBPMS and RBFOX2, activates vascular smooth muscle cells alternative splicing events. Regulates NCOR2 alternative splicing. The sequence is that of Muscleblind-like protein 1 (MBNL1) from Homo sapiens (Human).